The primary structure comprises 288 residues: MSLSNFNLQSKVLLHPLVLFQIIDAYERRAKDVPEVLGTLLGTVAGKTGRIEITNCFSVVHRMHGDNNCHIDLDLKYDNDMLELAQIAYPQEKVLGWFSTGKSVSAAAVELHEYYERQCHNGQPLHLLMDTSLRGQRMNTRIFCAVATGVPGGTKGLMFSLLPMDIYFGSPDIVAMRHMGRQCAQPTKDAGRLLPELEQVVDATKDIQQKLDLVLRYINDILNRKRRPDNTVGRALHDVLTSVPMVEAERFRHMFNTNMRDLLMSLTLSSMIKTQLQLSERLSNMVDA.

In terms of domain architecture, MPN spans 12-149 (VLLHPLVLFQ…TRIFCAVATG (138 aa)).

Belongs to the eIF-3 subunit F family. In terms of assembly, component of the eukaryotic translation initiation factor 3 (eIF-3) complex. The eIF-3 complex interacts with pix.

The protein localises to the cytoplasm. Component of the eukaryotic translation initiation factor 3 (eIF-3) complex, which is involved in protein synthesis of a specialized repertoire of mRNAs and, together with other initiation factors, stimulates binding of mRNA and methionyl-tRNAi to the 40S ribosome. The eIF-3 complex specifically targets and initiates translation of a subset of mRNAs involved in cell proliferation. This is Eukaryotic translation initiation factor 3 subunit F-2 from Drosophila pseudoobscura pseudoobscura (Fruit fly).